The sequence spans 203 residues: MKLENHNLAVASLKTQRISAFKARLVAVLLKGKKVSDALAILAHTKKKASPIFTKLINSAVANAINNHGFEHSNLIIKAAIVNEGPTLKRFRPRAKGAASQILKRTSHFKVILVSQNGGESQNQEYQETEKNLVTKSPENTQSGALSQQSQAEQPQNDPENGVDSQLSAKTNSTTTAKKTDLADNSTKNDATNTVLAQEKEVK.

Polar residues predominate over residues 138-167; that stretch reads PENTQSGALSQQSQAEQPQNDPENGVDSQL. Residues 138–203 are disordered; that stretch reads PENTQSGALS…TVLAQEKEVK (66 aa). The span at 168-177 shows a compositional bias: low complexity; sequence SAKTNSTTTA. Residues 183 to 196 are compositionally biased toward polar residues; that stretch reads ADNSTKNDATNTVL.

The protein belongs to the universal ribosomal protein uL22 family. In terms of assembly, part of the 50S ribosomal subunit.

Its function is as follows. This protein binds specifically to 23S rRNA; its binding is stimulated by other ribosomal proteins, e.g. L4, L17, and L20. It is important during the early stages of 50S assembly. It makes multiple contacts with different domains of the 23S rRNA in the assembled 50S subunit and ribosome. Functionally, the globular domain of the protein is located near the polypeptide exit tunnel on the outside of the subunit, while an extended beta-hairpin is found that lines the wall of the exit tunnel in the center of the 70S ribosome. This is Large ribosomal subunit protein uL22 from Mesomycoplasma hyopneumoniae (strain 7448) (Mycoplasma hyopneumoniae).